A 373-amino-acid chain; its full sequence is Flagellar P-ring protein 1 (373 aa).

The N-terminal stretch at M1 to A24 is a signal peptide.

The protein belongs to the FlgI family. The basal body constitutes a major portion of the flagellar organelle and consists of four rings (L,P,S, and M) mounted on a central rod.

It is found in the periplasm. Its subcellular location is the bacterial flagellum basal body. Functionally, assembles around the rod to form the L-ring and probably protects the motor/basal body from shearing forces during rotation. This is Flagellar P-ring protein 1 from Hahella chejuensis (strain KCTC 2396).